The chain runs to 657 residues: UvrABC system protein B (657 aa).

One can recognise a Helicase ATP-binding domain in the interval 25-182 (KSIKQGNEFQ…KKLIEIQYER (158 aa)). 38–45 (GVTGSGKT) serves as a coordination point for ATP. The Beta-hairpin motif lies at 91–114 (YYDYYQPEAYVPQTDTFIEKDASI). The Helicase C-terminal domain maps to 429–595 (QIDDLYTEIQ…TINKEVRELI (167 aa)). Residues 621 to 656 (KKLIKEYTDEMKLAAKNLQFERAAQLRDKIEELKGK) form the UVR domain.

Belongs to the UvrB family. Forms a heterotetramer with UvrA during the search for lesions. Interacts with UvrC in an incision complex.

It is found in the cytoplasm. In terms of biological role, the UvrABC repair system catalyzes the recognition and processing of DNA lesions. A damage recognition complex composed of 2 UvrA and 2 UvrB subunits scans DNA for abnormalities. Upon binding of the UvrA(2)B(2) complex to a putative damaged site, the DNA wraps around one UvrB monomer. DNA wrap is dependent on ATP binding by UvrB and probably causes local melting of the DNA helix, facilitating insertion of UvrB beta-hairpin between the DNA strands. Then UvrB probes one DNA strand for the presence of a lesion. If a lesion is found the UvrA subunits dissociate and the UvrB-DNA preincision complex is formed. This complex is subsequently bound by UvrC and the second UvrB is released. If no lesion is found, the DNA wraps around the other UvrB subunit that will check the other stand for damage. The protein is UvrABC system protein B of Clostridium botulinum (strain Eklund 17B / Type B).